Reading from the N-terminus, the 756-residue chain is Alpha-1,2-mannosyltransferase MNN26 (756 aa).

The Cytoplasmic portion of the chain corresponds to 1 to 10 (MSLRRLSPSH). Residues 11–31 (LILGTLVLGVIIFNLYVLTST) traverse the membrane as a helical segment. At 32–756 (HEDIKKVKGP…NGKNKQGAAS (725 aa)) the chain is on the extracellular side. Over residues 723-734 (LGEKSQPKQPEI) the composition is skewed to polar residues. Positions 723–756 (LGEKSQPKQPEINNNNNNNNNDDDNGKNKQGAAS) are disordered.

The protein belongs to the MNN1/MNT family.

The protein localises to the golgi apparatus membrane. It participates in protein modification; protein glycosylation. Its function is as follows. Alpha-1,2-mannosyltransferase required for cell wall integrity. Responsible for addition of the first alpha-1,2-linked mannose to form the branches on the mannan backbone of oligosaccharides. Addition of alpha-1,2-mannose is required for stabilization of the alpha-1,6-mannose backbone and hence regulates mannan fibril length; and is important for both immune recognition and virulence. In Candida albicans (strain SC5314 / ATCC MYA-2876) (Yeast), this protein is Alpha-1,2-mannosyltransferase MNN26 (MNN26).